We begin with the raw amino-acid sequence, 282 residues long: Putative 4-diphosphocytidyl-2-C-methyl-D-erythritol kinase (282 aa).

Residue Lys-9 is part of the active site. 93-103 contributes to the ATP binding site; that stretch reads PVSAGLAGGSA. The active site involves Asp-135.

This sequence belongs to the GHMP kinase family. IspE subfamily.

The catalysed reaction is 4-CDP-2-C-methyl-D-erythritol + ATP = 4-CDP-2-C-methyl-D-erythritol 2-phosphate + ADP + H(+). Its function is as follows. Catalyzes the phosphorylation of the position 2 hydroxy group of 4-diphosphocytidyl-2C-methyl-D-erythritol. The protein is Putative 4-diphosphocytidyl-2-C-methyl-D-erythritol kinase of Staphylococcus haemolyticus (strain JCSC1435).